The sequence spans 490 residues: uncharacterized protein (490 aa).

A helical membrane pass occupies residues 27–47 (VYVFLTTIILLLSLISTLIII).

The protein localises to the membrane. This is an uncharacterized protein from Borreliella burgdorferi (strain ATCC 35210 / DSM 4680 / CIP 102532 / B31) (Borrelia burgdorferi).